A 108-amino-acid chain; its full sequence is Large ribosomal subunit protein uL24 (108 aa).

Belongs to the universal ribosomal protein uL24 family. Part of the 50S ribosomal subunit.

One of two assembly initiator proteins, it binds directly to the 5'-end of the 23S rRNA, where it nucleates assembly of the 50S subunit. Functionally, one of the proteins that surrounds the polypeptide exit tunnel on the outside of the subunit. The protein is Large ribosomal subunit protein uL24 of Mycoplasmopsis synoviae (strain 53) (Mycoplasma synoviae).